Here is a 986-residue protein sequence, read N- to C-terminus: Epidermin biosynthesis protein EpiB (986 aa).

The protein to B.subtilis SpaB and L.lactis NisB.

Its subcellular location is the cell membrane. In terms of biological role, involved in the post-translational modification of the lantibiotic epidermin. This is Epidermin biosynthesis protein EpiB (epiB) from Staphylococcus epidermidis.